Here is a 451-residue protein sequence, read N- to C-terminus: MNDDIKTVTVYPTTLELTTPTKSANGSNDDYDPHQHRELKNPTTNFQTFAHFLKASVGTGVLAMPSAFAHAGYVNGTLLTLIIGSLALYCLHILIKCMYILCKRQRVPYVSFSQAMNLGLKQGPPWLRCLAPIAVPFVDGFLAFYHFGICCVYVVFIAESIKQLVDEYLVVWDVRIHMCIIIVPLLLIYSIKNLKLLAPFSSAANLLLLVGFGIILYYIFEELPPLSERDPFVAAGKLPTFFGTVLFALEAVGVILAIEENMATPKSFVGPCGILNSGMSIVLGLYVLLGFFGYWKYGNESEGSITLNIPQSEIPAQVVKVFFAITTWISYALQGYVTAHILWDKYLAKRFKETRQTFYELIFRAIIVLLTFGCAVAIPDLSVFLSLVGSFCLSILGLIFPVLLQICVQYTEGYGPFRIKLIINLLLLCFGIFGGVVGTYVSILDIIAVYK.

Residues 1 to 48 (MNDDIKTVTVYPTTLELTTPTKSANGSNDDYDPHQHRELKNPTTNFQT) lie on the Cytoplasmic side of the membrane. Residues 49–69 (FAHFLKASVGTGVLAMPSAFA) traverse the membrane as a helical segment. Topologically, residues 70–80 (HAGYVNGTLLT) are extracellular. Residue asparagine 75 is glycosylated (N-linked (GlcNAc...) asparagine). A helical transmembrane segment spans residues 81-101 (LIIGSLALYCLHILIKCMYIL). Residues 102-136 (CKRQRVPYVSFSQAMNLGLKQGPPWLRCLAPIAVP) are Cytoplasmic-facing. A helical membrane pass occupies residues 137–157 (FVDGFLAFYHFGICCVYVVFI). Residues 158 to 167 (AESIKQLVDE) are Extracellular-facing. A helical membrane pass occupies residues 168–188 (YLVVWDVRIHMCIIIVPLLLI). The Cytoplasmic portion of the chain corresponds to 189 to 199 (YSIKNLKLLAP). Residues 200–220 (FSSAANLLLLVGFGIILYYIF) traverse the membrane as a helical segment. At 221–237 (EELPPLSERDPFVAAGK) the chain is on the extracellular side. Residues 238–258 (LPTFFGTVLFALEAVGVILAI) form a helical membrane-spanning segment. Residues 259-272 (EENMATPKSFVGPC) are Cytoplasmic-facing. A helical membrane pass occupies residues 273 to 293 (GILNSGMSIVLGLYVLLGFFG). Over 294–320 (YWKYGNESEGSITLNIPQSEIPAQVVK) the chain is Extracellular. An N-linked (GlcNAc...) asparagine glycan is attached at asparagine 299. The helical transmembrane segment at 321 to 341 (VFFAITTWISYALQGYVTAHI) threads the bilayer. At 342–357 (LWDKYLAKRFKETRQT) the chain is on the cytoplasmic side. A helical membrane pass occupies residues 358 to 378 (FYELIFRAIIVLLTFGCAVAI). The Extracellular segment spans residues 379 to 382 (PDLS). The helical transmembrane segment at 383–403 (VFLSLVGSFCLSILGLIFPVL) threads the bilayer. At 404 to 420 (LQICVQYTEGYGPFRIK) the chain is on the cytoplasmic side. A helical membrane pass occupies residues 421 to 441 (LIINLLLLCFGIFGGVVGTYV). Over 442-451 (SILDIIAVYK) the chain is Extracellular.

This sequence belongs to the amino acid/polyamine transporter 2 family. In terms of tissue distribution, expressed in the proximal and distal regions of the midgut; expressed in enterocytes and progenitor cells. Expression increases in response to intestinal bacterial infection and spreads further into the midgut, eventually covering the entire midgut.

Its subcellular location is the cell membrane. It localises to the late endosome membrane. The protein resides in the lysosome membrane. The protein localises to the basal cell membrane. In terms of biological role, amino acid transporter which has pH-dependent electrogenic transport activity for alanine, glycine and proline. Plays a role in positive regulation of growth by directly or indirectly modulating the effects of the TOR signaling pathway. Required in enterocytes for the efficient recovery of gut epithelium following the cytoplasmic purge response to bacterial infection. Acts cell-autonomously to promote the retrograde transport of amino acids into the intestinal epithelium. Acts non-cell-autonomously through the insulin signaling pathway to stimulate Myc expression and the release of amino acids from nutrient stores into the hemolymph. The polypeptide is Proton-coupled amino acid transporter-like protein acs (Drosophila melanogaster (Fruit fly)).